A 410-amino-acid polypeptide reads, in one-letter code: Divergent protein kinase domain 1A (410 aa).

Topologically, residues 1–5 are cytoplasmic; sequence MARLS. A helical membrane pass occupies residues 6–26; sequence YVRIKYLFFSWLAVFIGSWVI. Topologically, residues 27–410 are lumenal; that stretch reads YVRYNSYTEL…WKKISHTNDS (384 aa).

It belongs to the DIPK family. In terms of processing, among the many cysteines in the lumenal domain, most are probably involved in disulfide bonds.

The protein localises to the endoplasmic reticulum membrane. The polypeptide is Divergent protein kinase domain 1A (dipk1a) (Xenopus laevis (African clawed frog)).